A 131-amino-acid polypeptide reads, in one-letter code: Large ribosomal subunit protein bL17 (131 aa).

This sequence belongs to the bacterial ribosomal protein bL17 family. Part of the 50S ribosomal subunit. Contacts protein L32.

This chain is Large ribosomal subunit protein bL17, found in Cupriavidus pinatubonensis (strain JMP 134 / LMG 1197) (Cupriavidus necator (strain JMP 134)).